We begin with the raw amino-acid sequence, 261 residues long: MWFLILFLALSLGGIDAAPPVQSRIVGGFKCEKNSQPWHVAVYRYTQYLCGGVLLDPNWVLTAAHCYDDNYKVWLGKNNLFKDEPSAQHRFVSKAIPHPGFNMSLMRKHIRFLEYDYSNDLMLLRLSKPADITDTVKPITLPTEEPKLGSTCLASGWGSITPTKFQFTDDLYCVNLKLLPNEDCAKAHIEKVTDAMLCAGEMDGGKDTCKGDSGGPLICDGVLQGITSWGHTPCGEPDMPGVYTKLNKFTSWIKDTMAKNP.

A signal peptide spans 1–18 (MWFLILFLALSLGGIDAA). A propeptide spans 19–24 (PPVQSR) (activation peptide). The tract at residues 25-107 (IVGGFKCEKN…HPGFNMSLMR (83 aa)) is segment B1. The region spanning 25 to 258 (IVGGFKCEKN…FTSWIKDTMA (234 aa)) is the Peptidase S1 domain. Intrachain disulfides connect C31–C173, C50–C66, C152–C219, C184–C198, and C209–C234. The active-site Charge relay system is H65. N102 is a glycosylation site (N-linked (GlcNAc...) asparagine). Residues 112-164 (FLEYDYSNDLMLLRLSKPADITDTVKPITLPTEEPKLGSTCLASGWGSITPTK) are segment C. Positions 112 to 261 (FLEYDYSNDL…WIKDTMAKNP (150 aa)) are segment A. The Charge relay system role is filled by D120. A segment B2 region spans residues 165–261 (FQFTDDLYCV…WIKDTMAKNP (97 aa)). S213 functions as the Charge relay system in the catalytic mechanism. 2 residues coordinate Zn(2+): H231 and E236.

The protein belongs to the peptidase S1 family. Kallikrein subfamily. In terms of assembly, 7S nerve growth factor is composed of two alpha chains, a beta dimer composed of identical chains, and two gamma chains. The cofactor is Zn(2+).

It catalyses the reaction Preferential cleavage of Arg-|-Xaa bonds in small molecule substrates. Highly selective action to release kallidin (lysyl-bradykinin) from kininogen involves hydrolysis of Met-|-Xaa or Leu-|-Xaa.. Functionally, 7S NGF alpha chain stabilizes the 7S complex. The beta dimer promotes neurite growth. The gamma chain is an arginine-specific protease; it may also have plasminogen activator activity, as well as mitogenic activity for chick embryo fibroblasts. This chain is Kallikrein 1-related peptidase b3 (Klk1b3), found in Mus musculus (Mouse).